We begin with the raw amino-acid sequence, 331 residues long: DNA-directed RNA polymerase subunit alpha (331 aa).

The segment at 1-226 is alpha N-terminal domain (alpha-NTD); that stretch reads MLIAQRPTLT…ELFGLARELN (226 aa). Residues 243-331 are alpha C-terminal domain (alpha-CTD); it reads LSSELSMPIE…SYDEDETTTN (89 aa).

The protein belongs to the RNA polymerase alpha chain family. As to quaternary structure, homodimer. The RNAP catalytic core consists of 2 alpha, 1 beta, 1 beta' and 1 omega subunit. When a sigma factor is associated with the core the holoenzyme is formed, which can initiate transcription.

It catalyses the reaction RNA(n) + a ribonucleoside 5'-triphosphate = RNA(n+1) + diphosphate. In terms of biological role, DNA-dependent RNA polymerase catalyzes the transcription of DNA into RNA using the four ribonucleoside triphosphates as substrates. The sequence is that of DNA-directed RNA polymerase subunit alpha from Clavibacter michiganensis subsp. michiganensis (strain NCPPB 382).